The chain runs to 369 residues: Porin-like protein BUsg_347 (369 aa).

The signal sequence occupies residues 1–23; the sequence is MKNHKSLAILIPMLFAGSTAVNA.

Belongs to the Gram-negative porin family. As to quaternary structure, homotrimer.

It localises to the cell outer membrane. Forms pores that allow passive diffusion of small molecules across the membrane. The sequence is that of Porin-like protein BUsg_347 from Buchnera aphidicola subsp. Schizaphis graminum (strain Sg).